A 268-amino-acid chain; its full sequence is Undecaprenyl-diphosphatase (268 aa).

Helical transmembrane passes span 43–63, 85–105, 108–128, 141–161, 184–204, 217–237, and 246–266; these read FWKT…LAIY, IGVL…GTFI, VLFN…VLLW, AMAF…AAMV, AAEF…VYDV, FIII…VKTF, and FTFF…ALAL.

Belongs to the UppP family.

The protein localises to the cell inner membrane. It carries out the reaction di-trans,octa-cis-undecaprenyl diphosphate + H2O = di-trans,octa-cis-undecaprenyl phosphate + phosphate + H(+). In terms of biological role, catalyzes the dephosphorylation of undecaprenyl diphosphate (UPP). Confers resistance to bacitracin. The sequence is that of Undecaprenyl-diphosphatase from Afipia carboxidovorans (strain ATCC 49405 / DSM 1227 / KCTC 32145 / OM5) (Oligotropha carboxidovorans).